We begin with the raw amino-acid sequence, 484 residues long: tRNA sulfurtransferase (484 aa).

In terms of domain architecture, THUMP spans 63 to 167 (QAFGERLACI…GDKLYMVTKR (105 aa)). Residues 185 to 186 (LI), lysine 267, glycine 289, and glutamine 298 each bind ATP. A disulfide bond links cysteine 346 and cysteine 458. The Rhodanese domain occupies 406 to 484 (IDTNEVVIDI…GYHNVKVYRP (79 aa)). The active-site Cysteine persulfide intermediate is cysteine 458.

The protein belongs to the ThiI family.

It localises to the cytoplasm. The catalysed reaction is [ThiI sulfur-carrier protein]-S-sulfanyl-L-cysteine + a uridine in tRNA + 2 reduced [2Fe-2S]-[ferredoxin] + ATP + H(+) = [ThiI sulfur-carrier protein]-L-cysteine + a 4-thiouridine in tRNA + 2 oxidized [2Fe-2S]-[ferredoxin] + AMP + diphosphate. It carries out the reaction [ThiS sulfur-carrier protein]-C-terminal Gly-Gly-AMP + S-sulfanyl-L-cysteinyl-[cysteine desulfurase] + AH2 = [ThiS sulfur-carrier protein]-C-terminal-Gly-aminoethanethioate + L-cysteinyl-[cysteine desulfurase] + A + AMP + 2 H(+). Its pathway is cofactor biosynthesis; thiamine diphosphate biosynthesis. Catalyzes the ATP-dependent transfer of a sulfur to tRNA to produce 4-thiouridine in position 8 of tRNAs, which functions as a near-UV photosensor. Also catalyzes the transfer of sulfur to the sulfur carrier protein ThiS, forming ThiS-thiocarboxylate. This is a step in the synthesis of thiazole, in the thiamine biosynthesis pathway. The sulfur is donated as persulfide by IscS. The polypeptide is tRNA sulfurtransferase (Shewanella sp. (strain MR-4)).